Reading from the N-terminus, the 955-residue chain is Anion exchange protein 4 (955 aa).

Disordered regions lie at residues 20–50 (VGQL…PEDP), 154–190 (HTQT…PLRQ), and 331–352 (PHRT…PELQ). 4 helical membrane-spanning segments follow: residues 387 to 407 (AVLY…GLLG), 415 to 435 (GVLE…LMAG), 472 to 492 (VGIW…SVLV), and 503 to 523 (FCAL…LNLA). Positions 387-955 (AVLYIYLATV…KAPEINISVN (569 aa)) are membrane (anion exchange). N-linked (GlcNAc...) asparagine glycosylation is found at N548 and N572. 7 helical membrane passes run 596-616 (VPDI…FAIA), 637-657 (FSSI…GLAM), 684-704 (PWWL…LIFM), 730-750 (LFCV…WYVS), 785-804 (LTGL…APVL), 811-830 (VLYG…IQFM), and 871-891 (LWII…LGLV). The disordered stretch occupies residues 918–955 (RNVPEKGLEPGHSFSGSDSEDSELMYQPKAPEINISVN). N951 carries N-linked (GlcNAc...) asparagine glycosylation.

It belongs to the anion exchanger (TC 2.A.31) family. In terms of tissue distribution, highly expressed in kidney. Expressed in the outer medulla and the inner medulla in the kidney cortex. Only expressed in beta-intercalated cells.

The protein resides in the lateral cell membrane. Its subcellular location is the apical cell membrane. The protein localises to the basolateral cell membrane. It catalyses the reaction 2 hydrogencarbonate(out) + chloride(in) + Na(+)(out) = 2 hydrogencarbonate(in) + chloride(out) + Na(+)(in). It carries out the reaction K(+)(in) + 2 hydrogencarbonate(in) + chloride(out) = K(+)(out) + 2 hydrogencarbonate(out) + chloride(in). The catalysed reaction is Li(+)(in) + 2 hydrogencarbonate(in) + chloride(out) = Li(+)(out) + 2 hydrogencarbonate(out) + chloride(in). The enzyme catalyses Rb(+)(in) + 2 hydrogencarbonate(in) + chloride(out) = Rb(+)(out) + 2 hydrogencarbonate(out) + chloride(in). It catalyses the reaction Cs(+)(in) + 2 hydrogencarbonate(in) + chloride(out) = Cs(+)(out) + 2 hydrogencarbonate(out) + chloride(in). In terms of biological role, electroneutral Cl(-)/HCO3(-) antiporter that favors chloride ion entry and efflux of hydrogencarbonate and sodium ion across the basolateral membrane and may participat in salivary secretion. Also mediates Cl(-)/HCO3(-) exchange activity in the presence of K(+) as well as Cs(+), Li(+), and Rb(+). Does not contribute to Cl(-)/HCO3(-) exchanger in the apical membrane of the upper villous epithelium. This chain is Anion exchange protein 4, found in Oryctolagus cuniculus (Rabbit).